The following is a 149-amino-acid chain: UPF0756 membrane protein MS1439 (149 aa).

4 consecutive transmembrane segments (helical) span residues 10 to 32, 56 to 76, 82 to 102, and 126 to 146; these read IMLVVLILLGVLSNNNSITISAL, VGIIILTVGVLAPLVSGKVQL, FLNWQMFLSIVIGIAVAWFAG, and VAFLGGIPVGPLIAAGILAVI.

The protein belongs to the UPF0756 family.

Its subcellular location is the cell membrane. This chain is UPF0756 membrane protein MS1439, found in Mannheimia succiniciproducens (strain KCTC 0769BP / MBEL55E).